Consider the following 697-residue polypeptide: Protein Niban 3 (697 aa).

Residues 1-48 form a disordered region; sequence MGPDRKEVPLSRGTQAVVVGKGRGAPGDDSSMGGRPSSPLDKQQRQHL.

Belongs to the Niban family. In terms of tissue distribution, specifically expressed in B-lymphocytes.

This is Protein Niban 3 from Homo sapiens (Human).